Here is a 92-residue protein sequence, read N- to C-terminus: YcgL domain-containing protein Sfri_1738 (92 aa).

The YcgL domain occupies 1 to 85; that stretch reads MICAVYKSGR…PQINLLEQHK (85 aa).

The protein is YcgL domain-containing protein Sfri_1738 of Shewanella frigidimarina (strain NCIMB 400).